We begin with the raw amino-acid sequence, 114 residues long: Large ribosomal subunit protein uL22 (114 aa).

It belongs to the universal ribosomal protein uL22 family. As to quaternary structure, part of the 50S ribosomal subunit.

In terms of biological role, this protein binds specifically to 23S rRNA; its binding is stimulated by other ribosomal proteins, e.g. L4, L17, and L20. It is important during the early stages of 50S assembly. It makes multiple contacts with different domains of the 23S rRNA in the assembled 50S subunit and ribosome. The globular domain of the protein is located near the polypeptide exit tunnel on the outside of the subunit, while an extended beta-hairpin is found that lines the wall of the exit tunnel in the center of the 70S ribosome. In Bacillus licheniformis (strain ATCC 14580 / DSM 13 / JCM 2505 / CCUG 7422 / NBRC 12200 / NCIMB 9375 / NCTC 10341 / NRRL NRS-1264 / Gibson 46), this protein is Large ribosomal subunit protein uL22.